We begin with the raw amino-acid sequence, 265 residues long: Thiazole synthase (265 aa).

Lys106 acts as the Schiff-base intermediate with DXP in catalysis. Residues Gly167, 193–194 (AG), and 215–216 (NS) each bind 1-deoxy-D-xylulose 5-phosphate.

The protein belongs to the ThiG family. In terms of assembly, homotetramer. Forms heterodimers with either ThiH or ThiS.

The protein resides in the cytoplasm. It catalyses the reaction [ThiS sulfur-carrier protein]-C-terminal-Gly-aminoethanethioate + 2-iminoacetate + 1-deoxy-D-xylulose 5-phosphate = [ThiS sulfur-carrier protein]-C-terminal Gly-Gly + 2-[(2R,5Z)-2-carboxy-4-methylthiazol-5(2H)-ylidene]ethyl phosphate + 2 H2O + H(+). Its pathway is cofactor biosynthesis; thiamine diphosphate biosynthesis. In terms of biological role, catalyzes the rearrangement of 1-deoxy-D-xylulose 5-phosphate (DXP) to produce the thiazole phosphate moiety of thiamine. Sulfur is provided by the thiocarboxylate moiety of the carrier protein ThiS. In vitro, sulfur can be provided by H(2)S. The polypeptide is Thiazole synthase (Prochlorococcus marinus subsp. pastoris (strain CCMP1986 / NIES-2087 / MED4)).